Here is a 313-residue protein sequence, read N- to C-terminus: Porphobilinogen deaminase (313 aa).

Cys-242 carries the post-translational modification S-(dipyrrolylmethanemethyl)cysteine.

The protein belongs to the HMBS family. Monomer. Dipyrromethane serves as cofactor.

It carries out the reaction 4 porphobilinogen + H2O = hydroxymethylbilane + 4 NH4(+). It participates in porphyrin-containing compound metabolism; protoporphyrin-IX biosynthesis; coproporphyrinogen-III from 5-aminolevulinate: step 2/4. Functionally, tetrapolymerization of the monopyrrole PBG into the hydroxymethylbilane pre-uroporphyrinogen in several discrete steps. The protein is Porphobilinogen deaminase of Salmonella dublin (strain CT_02021853).